The sequence spans 231 residues: Venom allergen 3 homolog (231 aa).

Positions 1 to 21 are cleaved as a signal peptide; that stretch reads MSSCMLFFTVIIAGVFMGTIA. Disulfide bonds link Cys-25-Cys-40, Cys-30-Cys-124, and Cys-51-Cys-117. In terms of domain architecture, SCP spans 68–215; sequence VTLHNQLRRK…WNQQYLVCNY (148 aa). N-linked (GlcNAc...) asparagine glycosylation is present at Asn-145. Cys-196 and Cys-213 are disulfide-bonded.

The protein belongs to the CRISP family. As to expression, expressed by the venom gland.

It is found in the secreted. The protein is Venom allergen 3 homolog of Dinoponera quadriceps (South American ant).